A 221-amino-acid chain; its full sequence is Histone H1.3 (221 aa).

The span at 1-17 shows a compositional bias: low complexity; sequence MSETAPLAPTIPAPAEK. Residues 1–43 are disordered; the sequence is MSETAPLAPTIPAPAEKTPVKKKAKKAGATAGKRKASGPPVSE. Residue Ser-2 is modified to N-acetylserine. Residue Ser-2 is modified to Phosphoserine. N6-acetyllysine is present on Lys-17. Thr-18 is subject to Phosphothreonine. Positions 20 to 36 are enriched in basic residues; the sequence is VKKKAKKAGATAGKRKA. 3 positions are modified to N6-(beta-hydroxybutyryl)lysine: Lys-35, Lys-47, and Lys-53. Residues 37–110 form the H15 domain; sequence SGPPVSELIT…GASGSFKLNK (74 aa). Arg-55 bears the Citrulline mark. An N6-(beta-hydroxybutyryl)lysine mark is found at Lys-65, Lys-76, Lys-86, and Lys-91. Residues 90 to 221 are disordered; sequence SKGTLVQTKG…KAKKAAPKKK (132 aa). Phosphoserine; by PKC is present on Ser-105. Lys-107 carries the N6-(beta-hydroxybutyryl)lysine modification. Basic residues-rich tracts occupy residues 120-141, 150-161, and 170-179; these read KAKKAGAAKPRKPAGAAKKPKK, KSIKKTPKKVKK, and KVAKSAKKVK. Lys-170 is modified (N6-(beta-hydroxybutyryl)lysine). The segment covering 180–193 has biased composition (low complexity); it reads TPQPKKAAKSPAKA. The segment covering 194-221 has biased composition (basic residues); it reads KAPKPKAAKPKSGKPKVTKAKKAAPKKK.

This sequence belongs to the histone H1/H5 family. In terms of processing, H1 histones are progressively phosphorylated during the cell cycle, becoming maximally phosphorylated during late G2 phase and M phase, and being dephosphorylated sharply thereafter. Citrullination at Arg-55 (H1R54ci) by PADI4 takes place within the DNA-binding site of H1 and results in its displacement from chromatin and global chromatin decondensation, thereby promoting pluripotency and stem cell maintenance.

It localises to the nucleus. It is found in the chromosome. In terms of biological role, histone H1 protein binds to linker DNA between nucleosomes forming the macromolecular structure known as the chromatin fiber. Histones H1 are necessary for the condensation of nucleosome chains into higher-order structured fibers. Also acts as a regulator of individual gene transcription through chromatin remodeling, nucleosome spacing and DNA methylation. This Homo sapiens (Human) protein is Histone H1.3.